The sequence spans 122 residues: MKPSIAIILCILILGVDSQRWVQFMKEAGQGSRDMWRAYSDMKKANWKNSDKYFHARGNYDAARRGPGGAWAAKVISDAREAVQKFTGHGAEDSRADQFANEWGRSGKDPNHFRPAGLPKRY.

The N-terminal stretch at 1–18 is a signal peptide; the sequence is MKPSIAIILCILILGVDS. The interval 87–122 is disordered; the sequence is TGHGAEDSRADQFANEWGRSGKDPNHFRPAGLPKRY.

Belongs to the SAA family. As to expression, found in various tissues.

It localises to the secreted. Its function is as follows. Major acute phase reactant. Apolipoprotein of the HDL complex. In vitro exhibits antimicrobial activity against Escherichia coli, Streptococcus uberis and Pseudomonas aeruginosa. This Mus musculus (Mouse) protein is Serum amyloid A-3 protein (Saa3).